A 129-amino-acid polypeptide reads, in one-letter code: Small ribosomal subunit protein uS11 (129 aa).

Belongs to the universal ribosomal protein uS11 family. As to quaternary structure, part of the 30S ribosomal subunit. Interacts with proteins S7 and S18. Binds to IF-3.

Located on the platform of the 30S subunit, it bridges several disparate RNA helices of the 16S rRNA. Forms part of the Shine-Dalgarno cleft in the 70S ribosome. This is Small ribosomal subunit protein uS11 from Enterococcus faecalis (strain ATCC 700802 / V583).